The following is a 1013-amino-acid chain: PHD finger protein 20-like protein 1 (1013 aa).

The region spanning 11-71 (ITFEIGARLE…SNRLRPLERP (61 aa)) is the Tudor 1 domain. Residues lysine 75 and lysine 79 each participate in a glycyl lysine isopeptide (Lys-Gly) (interchain with G-Cter in SUMO2) cross-link. The region spanning 85 to 141 (FDFKAGEEVLARWTDCRYYPAKIEAINKEGTFTVQFYDGVIRCLKRMHIKAMPEDAK) is the Tudor 2 domain. 4 disordered regions span residues 183 to 206 (AKNK…RDGG), 309 to 368 (EQAI…TPKS), 389 to 454 (VINK…QSSV), and 482 to 511 (VTGS…FANP). The span at 315 to 346 (KPQSQKKNEAVISSSANTQKPALLSSTLSSGK) shows a compositional bias: polar residues. Serine 368 carries the phosphoserine modification. The span at 404-415 (PCKHSERRRRSQ) shows a compositional bias: basic residues. At serine 432 the chain carries Phosphoserine. The segment covering 443-453 (SISSQNQQQSS) has biased composition (low complexity). The segment covering 496 to 505 (ECPREEKEET) has biased composition (basic and acidic residues). A Glycyl lysine isopeptide (Lys-Gly) (interchain with G-Cter in SUMO2) cross-link involves residue lysine 530. Positions 533–565 (KKVKLEEKTSTAFGKRKEKDKEKKEKRDKDHYK) are enriched in basic and acidic residues. A disordered region spans residues 533–585 (KKVKLEEKTSTAFGKRKEKDKEKKEKRDKDHYKPKQKKKKKKKKKSKQHDYSD). The segment covering 566–579 (PKQKKKKKKKKKSK) has biased composition (basic residues). The PHD-type zinc-finger motif lies at 681-729 (IVRCICELDEENGFMIQCEECLCWQHSVCMGLLEDSIPEQYICYICRDP). Over residues 824 to 852 (RKITPQDRANSEGKECVQNHKEPALRMEE) the composition is skewed to basic and acidic residues. A disordered region spans residues 824–911 (RKITPQDRAN…LLYKNRGVSE (88 aa)). The segment covering 854 to 878 (YITSEHSYQKPQSFSQDCQSLTDPG) has biased composition (polar residues). The span at 879 to 892 (SSDDDDASSFEEDG) shows a compositional bias: acidic residues. Lysine 905 is subject to N6-acetyllysine.

Interacts with methylated DNMT1 (DNMT1K142me1). Interacts with SOX2.

It is found in the nucleus. In terms of biological role, is a negative regulator of proteasomal degradation of a set of methylated proteins, including DNMT1 and SOX2. Involved in the maintainance of embryonic stem cells pluripotency, through the regulation of SOX2 levels. The polypeptide is PHD finger protein 20-like protein 1 (Phf20l1) (Mus musculus (Mouse)).